The chain runs to 211 residues: Large ribosomal subunit protein uL4 (211 aa).

Residues 40–87 (QQAHTRQGTASTLTRSEVRGGGRKPYKQKGTGRARQGSIRTPLRPGGG) form a disordered region. Over residues 41 to 54 (QAHTRQGTASTLTR) the composition is skewed to polar residues. The segment covering 60–71 (GGRKPYKQKGTG) has biased composition (basic residues).

The protein belongs to the universal ribosomal protein uL4 family. Part of the 50S ribosomal subunit.

One of the primary rRNA binding proteins, this protein initially binds near the 5'-end of the 23S rRNA. It is important during the early stages of 50S assembly. It makes multiple contacts with different domains of the 23S rRNA in the assembled 50S subunit and ribosome. Its function is as follows. Forms part of the polypeptide exit tunnel. This chain is Large ribosomal subunit protein uL4, found in Synechococcus sp. (strain WH7803).